The following is a 635-amino-acid chain: Elongation factor 4 (635 aa).

The 183-residue stretch at 11 to 193 (EKIRNFSIIA…QIVEKVPAPT (183 aa)) folds into the tr-type G domain. Residues 23-28 (DHGKST) and 140-143 (NKID) each bind GTP.

Belongs to the TRAFAC class translation factor GTPase superfamily. Classic translation factor GTPase family. LepA subfamily.

It localises to the cell membrane. It carries out the reaction GTP + H2O = GDP + phosphate + H(+). Its function is as follows. Required for accurate and efficient protein synthesis under certain stress conditions. May act as a fidelity factor of the translation reaction, by catalyzing a one-codon backward translocation of tRNAs on improperly translocated ribosomes. Back-translocation proceeds from a post-translocation (POST) complex to a pre-translocation (PRE) complex, thus giving elongation factor G a second chance to translocate the tRNAs correctly. Binds to ribosomes in a GTP-dependent manner. This chain is Elongation factor 4, found in Streptococcus pyogenes serotype M12 (strain MGAS2096).